The sequence spans 1393 residues: ABC transporter G family member 3 (1393 aa).

Residues 1–14 are compositionally biased toward basic and acidic residues; it reads MEDKNNIELQEKAP. Residues 1–68 are disordered; that stretch reads MEDKNNIELQ…IIYQNPTPAS (68 aa). Positions 15 to 50 are enriched in low complexity; the sequence is DNYNNNNNNNNNNNNNNNNNNNNNNNNNNNNNNDIN. The region spanning 100–353 is the ABC transporter 1 domain; the sequence is VSANNISYYI…YFSSIGLAPL (254 aa). 144-151 contributes to the ATP binding site; that stretch reads GIPGAGKS. The ABC transmembrane type-2 1 domain occupies 473-698; that stretch reads MQYAVRFFQA…SYADGGYQGN (226 aa). 7 consecutive transmembrane segments (helical) span residues 479–499, 509–529, 558–578, 585–605, 615–635, 640–660, and 724–744; these read FFQA…MGFT, LVYF…EEFF, IPIS…IAGF, FIVF…IFQV, LASL…GYMI, IPGW…IDMV, and VDIV…FLGV. The ABC transporter 2 domain occupies 783–1035; that stretch reads MTFQNLNYVV…VIQHFTSAGY (253 aa). Position 828–835 (828–835) interacts with ATP; the sequence is GPSGAGKS. Positions 1121–1388 constitute an ABC transmembrane type-2 2 domain; the sequence is QTILLRFLRS…FLGYLALRFI (268 aa). A run of 6 helical transmembrane segments spans residues 1122–1142, 1157–1177, 1206–1226, 1235–1255, 1265–1285, and 1364–1384; these read TILL…TLFL, LVFL…PTIV, LPMM…LTGL, FFFS…LATL, IAIL…GFFI, and FYNL…GYLA.

This sequence belongs to the ABC transporter superfamily. ABCG family. PDR (TC 3.A.1.205) subfamily.

The protein resides in the membrane. This chain is ABC transporter G family member 3 (abcG3), found in Dictyostelium discoideum (Social amoeba).